The primary structure comprises 231 residues: Phosphoglycolate phosphatase, plasmid (231 aa).

Aspartate 14 acts as the Nucleophile in catalysis. Mg(2+) contacts are provided by aspartate 14, aspartate 16, and aspartate 175.

This sequence belongs to the HAD-like hydrolase superfamily. CbbY/CbbZ/Gph/YieH family. Homotrimer. It depends on Mg(2+) as a cofactor.

It carries out the reaction 2-phosphoglycolate + H2O = glycolate + phosphate. Its pathway is organic acid metabolism; glycolate biosynthesis; glycolate from 2-phosphoglycolate: step 1/1. Its function is as follows. Specifically catalyzes the dephosphorylation of 2-phosphoglycolate. Is involved in the dissimilation of the intracellular 2-phosphoglycolate formed during the DNA repair of 3'-phosphoglycolate ends, a major class of DNA lesions induced by oxidative stress. The sequence is that of Phosphoglycolate phosphatase, plasmid (cbbZP) from Cupriavidus necator (strain ATCC 17699 / DSM 428 / KCTC 22496 / NCIMB 10442 / H16 / Stanier 337) (Ralstonia eutropha).